The chain runs to 273 residues: Rhamnulose-1-phosphate aldolase (273 aa).

The active site involves Glu-117. Zn(2+)-binding residues include His-140, His-142, and His-211.

Belongs to the aldolase class II family. RhaD subfamily. Requires Zn(2+) as cofactor.

It is found in the cytoplasm. It carries out the reaction L-rhamnulose 1-phosphate = (S)-lactaldehyde + dihydroxyacetone phosphate. Its pathway is carbohydrate degradation; L-rhamnose degradation; glycerone phosphate from L-rhamnose: step 3/3. In terms of biological role, catalyzes the reversible cleavage of L-rhamnulose-1-phosphate to dihydroxyacetone phosphate (DHAP) and L-lactaldehyde. The sequence is that of Rhamnulose-1-phosphate aldolase from Listeria monocytogenes serovar 1/2a (strain ATCC BAA-679 / EGD-e).